A 397-amino-acid polypeptide reads, in one-letter code: Phosphoglycerate kinase (397 aa).

Substrate contacts are provided by residues 23–25 (DLN), R38, 61–64 (HLGR), R119, and R152. Residues K202, E324, and 354–357 (GGDT) each bind ATP.

The protein belongs to the phosphoglycerate kinase family. In terms of assembly, monomer.

It is found in the cytoplasm. It catalyses the reaction (2R)-3-phosphoglycerate + ATP = (2R)-3-phospho-glyceroyl phosphate + ADP. The protein operates within carbohydrate degradation; glycolysis; pyruvate from D-glyceraldehyde 3-phosphate: step 2/5. The protein is Phosphoglycerate kinase (pgk) of Xanthobacter flavus.